We begin with the raw amino-acid sequence, 328 residues long: Biotin synthase (328 aa).

The 228-residue stretch at 48–275 folds into the Radical SAM core domain; sequence NRIQLSKLLN…KSHVRLTAGR (228 aa). [4Fe-4S] cluster contacts are provided by Cys63, Cys67, and Cys70. [2Fe-2S] cluster is bound by residues Cys107, Cys138, Cys198, and Arg270.

The protein belongs to the radical SAM superfamily. Biotin synthase family. In terms of assembly, homodimer. The cofactor is [4Fe-4S] cluster. [2Fe-2S] cluster serves as cofactor.

The catalysed reaction is (4R,5S)-dethiobiotin + (sulfur carrier)-SH + 2 reduced [2Fe-2S]-[ferredoxin] + 2 S-adenosyl-L-methionine = (sulfur carrier)-H + biotin + 2 5'-deoxyadenosine + 2 L-methionine + 2 oxidized [2Fe-2S]-[ferredoxin]. It participates in cofactor biosynthesis; biotin biosynthesis; biotin from 7,8-diaminononanoate: step 2/2. In terms of biological role, catalyzes the conversion of dethiobiotin (DTB) to biotin by the insertion of a sulfur atom into dethiobiotin via a radical-based mechanism. In Brucella abortus (strain S19), this protein is Biotin synthase.